A 389-amino-acid chain; its full sequence is 26S proteasome non-ATPase regulatory subunit 6 (389 aa).

Positions 193–361 (DFKQAAELFL…EVVETNRPDS (169 aa)) constitute a PCI domain.

Belongs to the proteasome subunit S10 family. In terms of assembly, component of the 19S proteasome regulatory particle complex. The 26S proteasome consists of a 20S core particle (CP) and two 19S regulatory subunits (RP). The regulatory particle is made of a lid composed of 9 subunits including PSMD6, a base containing 6 ATPases and few additional components.

Functionally, component of the 26S proteasome, a multiprotein complex involved in the ATP-dependent degradation of ubiquitinated proteins. This complex plays a key role in the maintenance of protein homeostasis by removing misfolded or damaged proteins, which could impair cellular functions, and by removing proteins whose functions are no longer required. Therefore, the proteasome participates in numerous cellular processes, including cell cycle progression, apoptosis, or DNA damage repair. This chain is 26S proteasome non-ATPase regulatory subunit 6 (PSMD6), found in Bos taurus (Bovine).